Consider the following 390-residue polypeptide: Enoyl-[acyl-carrier-protein] reductase [NADH], chloroplastic (390 aa).

A chloroplast-targeting transit peptide spans 1-74 (MAATAASSLQ…CKRPFSFSTR (74 aa)). Leu-53 and Asn-170 together coordinate NADP(+). Ser-239 (proton donor) is an active-site residue. The NADP(+) site is built by Lys-282 and Ser-314. Catalysis depends on Lys-282, which acts as the Lowers pKa of active site Tyr.

Belongs to the short-chain dehydrogenases/reductases (SDR) family. FabI subfamily. Homotetramer. As to expression, expressed in flowers and siliques and at lower levels in roots and leaves (at protein level).

Its subcellular location is the plastid. The protein resides in the chloroplast. It catalyses the reaction a 2,3-saturated acyl-[ACP] + NAD(+) = a (2E)-enoyl-[ACP] + NADH + H(+). Its pathway is lipid metabolism; fatty acid biosynthesis. With respect to regulation, inhibited by the phytotoxin cyperin and the synthetic antimicrobial compound triclosan. Catalyzes the NAD-dependent reduction of a carbon-carbon double bond in an enoyl moiety that is covalently linked to an acyl carrier protein (ACP). Catalyzes the last reduction step in the de novo synthesis cycle of fatty acids. Involved in the elongation cycle of fatty acids which are used in lipid metabolism. Required for normal plant growth. The sequence is that of Enoyl-[acyl-carrier-protein] reductase [NADH], chloroplastic (MOD1) from Arabidopsis thaliana (Mouse-ear cress).